Consider the following 458-residue polypeptide: Zinc finger protein 19 (458 aa).

The KRAB domain maps to 14–85 (VTFEDVAVHF…EAQDDPPAER (72 aa)). C2H2-type zinc fingers lie at residues 161–183 (FICEECGKSFSYFSYYARHQRIH), 189–211 (FECSECGKAFNGNSSLIRHQRIH), 217–239 (YQCEECGRAFNDNANLIRHQRIH), 245–267 (YYCTECGNSFTSSSEFVIHQRIH), 273–295 (YECNECGKAFVGNSPLLRHQKIH), 301–323 (YECNECGKSFGRTSHLSQHQRIH), 329–351 (YSCKVCGQAFNFHTKLTRHQRIH), 357–379 (FDCVDCGKAFSAQEQLKRHLRIH), and 385–407 (YVCDECGKALTSKRNLHQHQRIH). The C2H2-type 10; atypical zinc finger occupies 413–433 (YECSKYEKAFGTSSQLGHLEH).

Belongs to the krueppel C2H2-type zinc-finger protein family.

The protein resides in the nucleus. In terms of biological role, may be involved in transcriptional regulation. This chain is Zinc finger protein 19 (ZNF19), found in Homo sapiens (Human).